The chain runs to 382 residues: MGIKGLNAIISEHVPSAIRKSDIKSFFGRKVAIDASMSLYQFLIAVRQQDGGQLTNEAGETTSHLMGMFYRTLRMIDNGIKPCYVFDGKPPDLKSHELTKRSSRRVETEKKLAEATTELEKMKQERRLVKVSKEHNEEAQKLLGLMGIPYIIAPTEAEAQCAELAKKGKVYAAASEDMDTLCYRTPFLLRHLTFSETKKEPIHEIDTELVLRGLDLTIEQFVDLCIMLGCDYCESIRGVGPVTALKLIKTHGSIEKIVEFIESGESNNTKWKIPEDWPYKQARMLFLDPEVIDGNEINLKWSPPKEKELIEYLCDDKKFSEERVKSGISRLKKGLKSGIQGRLDGFFQVVPKTKEQLAAAAKRAQENKKLNKNKNKVTKGRR.

The tract at residues 1–105 (MGIKGLNAII…HELTKRSSRR (105 aa)) is N-domain. Asp34 is a binding site for Mg(2+). Arg47 and Arg71 together coordinate DNA. Mg(2+) is bound by residues Asp87, Glu156, Glu158, Asp177, and Asp179. Positions 120–251 (EKMKQERRLV…VTALKLIKTH (132 aa)) are I-domain. Glu156 is a binding site for DNA. DNA is bound by residues Gly229 and Asp231. Asp231 serves as a coordination point for Mg(2+). An interaction with PCNA region spans residues 339–347 (IQGRLDGFF). A disordered region spans residues 358 to 382 (AAAAKRAQENKKLNKNKNKVTKGRR). The segment covering 370–382 (LNKNKNKVTKGRR) has biased composition (basic residues).

It belongs to the XPG/RAD2 endonuclease family. FEN1 subfamily. In terms of assembly, interacts with PCNA. Three molecules of RAD27 bind to one PCNA trimer with each molecule binding to one PCNA monomer. PCNA stimulates the nuclease activity without altering cleavage specificity. The cofactor is Mg(2+). In terms of processing, phosphorylated. Phosphorylation upon DNA damage induces relocalization to the nuclear plasma.

The protein resides in the nucleus. It localises to the nucleolus. It is found in the nucleoplasm. The protein localises to the mitochondrion. Structure-specific nuclease with 5'-flap endonuclease and 5'-3' exonuclease activities involved in DNA replication and repair. During DNA replication, cleaves the 5'-overhanging flap structure that is generated by displacement synthesis when DNA polymerase encounters the 5'-end of a downstream Okazaki fragment. It enters the flap from the 5'-end and then tracks to cleave the flap base, leaving a nick for ligation. Also involved in the long patch base excision repair (LP-BER) pathway, by cleaving within the apurinic/apyrimidinic (AP) site-terminated flap. Acts as a genome stabilization factor that prevents flaps from equilibrating into structures that lead to duplications and deletions. Also possesses 5'-3' exonuclease activity on nicked or gapped double-stranded DNA, and exhibits RNase H activity. Also involved in replication and repair of rDNA and in repairing mitochondrial DNA. This Saccharomyces cerevisiae (strain RM11-1a) (Baker's yeast) protein is Flap endonuclease 1.